Consider the following 393-residue polypeptide: Phosphoglycerate kinase (393 aa).

Residues 21-23, Arg36, 59-62, Arg114, and Arg147 each bind substrate; these read DLN and HLGR. ATP contacts are provided by residues Lys198, Glu320, and 346 to 349; that span reads GGDT.

Belongs to the phosphoglycerate kinase family. As to quaternary structure, monomer.

Its subcellular location is the cytoplasm. The catalysed reaction is (2R)-3-phosphoglycerate + ATP = (2R)-3-phospho-glyceroyl phosphate + ADP. The protein operates within carbohydrate degradation; glycolysis; pyruvate from D-glyceraldehyde 3-phosphate: step 2/5. The sequence is that of Phosphoglycerate kinase from Methylobacillus flagellatus (strain ATCC 51484 / DSM 6875 / VKM B-1610 / KT).